The chain runs to 310 residues: tRNA uridine(34) hydroxylase (310 aa).

The Rhodanese domain occupies 124 to 218; it reads SDPEVLLIDT…YFEEVPQEES (95 aa). Cysteine 178 functions as the Cysteine persulfide intermediate in the catalytic mechanism.

The protein belongs to the TrhO family.

The enzyme catalyses uridine(34) in tRNA + AH2 + O2 = 5-hydroxyuridine(34) in tRNA + A + H2O. Catalyzes oxygen-dependent 5-hydroxyuridine (ho5U) modification at position 34 in tRNAs. This is tRNA uridine(34) hydroxylase from Pseudomonas putida (strain W619).